Consider the following 364-residue polypeptide: Adenosine 3'-phospho 5'-phosphosulfate transporter 2 (364 aa).

The next 10 helical transmembrane spans lie at 39–59 (WLQFVLLSLAIFILYIGYGYM), 74–94 (WTLTLIQFLIYSGCGYTECII), 106–126 (IYGVIAFFTVATMGLSNASVG), 131–151 (PTQVIFKCCKLIPVLIGGILI), 157–177 (GWIDIGAAMLMSLGIIMFTLA), 187–206 (SRGYIMICGALLADAVIGNI), 231–251 (VFIFAFVVLSGEVFSAIPFFL), 257–277 (TFGYALILSCLGYLGVNVVLT), 281–301 (VFGALVAVTVTTLRKALTIIL), and 310–330 (FTIEYVYAGSVVMLAIYLNLY).

This sequence belongs to the nucleotide-sugar transporter family. SLC35B subfamily.

Its subcellular location is the golgi apparatus membrane. Its function is as follows. Mediates the transport of adenosine 3'-phospho 5'-phosphosulfate (PAPS), from cytosol into Golgi. PAPS is a universal sulfuryl donor for sulfation events that take place in the Golgi. This Caenorhabditis elegans protein is Adenosine 3'-phospho 5'-phosphosulfate transporter 2 (pst-2).